A 217-amino-acid chain; its full sequence is Lipoprotein CseA (217 aa).

The first 34 residues, 1–34, serve as a signal peptide directing secretion; the sequence is MRGLGTESLRARGALKAAIAAVAGLAVLGLSVSA. Cys35 is lipidated: N-palmitoyl cysteine. Cys35 carries the S-diacylglycerol cysteine lipid modification. Disordered stretches follow at residues 39–66 and 192–217; these read GTGA…SPSK and FSEE…PAPN.

Its subcellular location is the cell membrane. Its function is as follows. May be involved in the stabilization of the cell envelope or may interact with the sensor protein CseC to modulate its activity, in response to cell envelope stress. This Streptomyces avermitilis (strain ATCC 31267 / DSM 46492 / JCM 5070 / NBRC 14893 / NCIMB 12804 / NRRL 8165 / MA-4680) protein is Lipoprotein CseA (cseA).